A 324-amino-acid polypeptide reads, in one-letter code: Adenosine kinase (324 aa).

Substrate is bound by residues Ser-8, Asp-12, Ser-36, Gly-48, Asn-52, Phe-102, Phe-116, and 172–173 (QQ). Residues Asn-195, 223-228 (TLGPKG), and Gly-256 contribute to the ATP site. Asp-257 lines the substrate pocket. Asp-257 acts as the Proton acceptor in catalysis.

This sequence belongs to the carbohydrate kinase PfkB family. Homodimer. Mg(2+) serves as cofactor.

It catalyses the reaction adenosine + ATP = AMP + ADP + H(+). The enzyme catalyses adenosine + GTP = GDP + AMP + H(+). It carries out the reaction dGTP + adenosine = dGDP + AMP + H(+). It participates in purine metabolism; AMP biosynthesis via salvage pathway; AMP from adenosine: step 1/1. Its function is as follows. Catalyzes the phosphorylation of adenosine to adenosine monophosphate (AMP). Prefers dGTP and GTP to ATP as phosphate donors in vitro. The protein is Adenosine kinase (adoK) of Mycobacterium bovis (strain ATCC BAA-935 / AF2122/97).